A 122-amino-acid chain; its full sequence is Holo-[acyl-carrier-protein] synthase (122 aa).

Mg(2+) is bound by residues Asp-5 and Glu-54.

Belongs to the P-Pant transferase superfamily. AcpS family. Mg(2+) serves as cofactor.

Its subcellular location is the cytoplasm. The enzyme catalyses apo-[ACP] + CoA = holo-[ACP] + adenosine 3',5'-bisphosphate + H(+). Functionally, transfers the 4'-phosphopantetheine moiety from coenzyme A to a Ser of acyl-carrier-protein. This chain is Holo-[acyl-carrier-protein] synthase, found in Aquifex aeolicus (strain VF5).